Reading from the N-terminus, the 147-residue chain is Two-component response regulator ORR11 (147 aa).

In terms of domain architecture, Response regulatory spans 29–146; it reads HVLAVDDSSV…DVSRLFSRVL (118 aa). Aspartate 79 carries the post-translational modification 4-aspartylphosphate.

Belongs to the ARR family. Type-A subfamily. In terms of processing, two-component system major event consists of a His-to-Asp phosphorelay between a sensor histidine kinase (HK) and a response regulator (RR). In plants, the His-to-Asp phosphorelay involves an additional intermediate named Histidine-containing phosphotransfer protein (HPt). This multistep phosphorelay consists of a His-Asp-His-Asp sequential transfer of a phosphate group between first a His and an Asp of the HK protein, followed by the transfer to a conserved His of the HPt protein and finally the transfer to an Asp in the receiver domain of the RR protein.

Its function is as follows. Functions as a response regulator involved in His-to-Asp phosphorelay signal transduction system. Phosphorylation of the Asp residue in the receiver domain activates the ability of the protein to promote the transcription of target genes. Type-A response regulators seem to act as negative regulators of the cytokinin signaling. The polypeptide is Two-component response regulator ORR11 (Oryza sativa subsp. indica (Rice)).